Consider the following 458-residue polypeptide: MSSGKIVQVIGAVVDVEFPQDQVPKIYDALIVDERGLTLEVQQQLGDGVVRTIAMGSSDGLKRSEKVSATGKPISVPVGKGTLGRIMDVLGEPVDEKGAVETEERWGIHRSAPSFAEQAGGAELLETGIKVIDLLCPFAKGGKVGLFGGAGVGKTVNMMELIRNIATEHAGYSVFAGVGERTREGNDFYHEMKDSNVLDKVALVYGQMNEPPGNRLRVALTGLTMAEYFRDEGRDILMFIDNIYRYTLAGTEVSALLGRMPSAVGYQPTLAEEMGKLQERITSTKTGSITSVQAVYVPADDLTDPSPATTFAHLDATVVLARGIAELGIYPAVDPLDSTSRQLDPLVVGEEHYNVARGVQGVLQRYKELRDIIAILGMDELSEDDKLTVARARKIQRFLSQPFFVAEVFTGAPGKYVPLKDTIASFKAILDGEYDHLPEQAFYMVGTVDEAAEKAKNL.

148–155 provides a ligand contact to ATP; the sequence is GGAGVGKT.

It belongs to the ATPase alpha/beta chains family. In terms of assembly, F-type ATPases have 2 components, CF(1) - the catalytic core - and CF(0) - the membrane proton channel. CF(1) has five subunits: alpha(3), beta(3), gamma(1), delta(1), epsilon(1). CF(0) has three main subunits: a(1), b(2) and c(9-12). The alpha and beta chains form an alternating ring which encloses part of the gamma chain. CF(1) is attached to CF(0) by a central stalk formed by the gamma and epsilon chains, while a peripheral stalk is formed by the delta and b chains.

Its subcellular location is the cell inner membrane. It carries out the reaction ATP + H2O + 4 H(+)(in) = ADP + phosphate + 5 H(+)(out). Functionally, produces ATP from ADP in the presence of a proton gradient across the membrane. The catalytic sites are hosted primarily by the beta subunits. The chain is ATP synthase subunit beta from Alkalilimnicola ehrlichii (strain ATCC BAA-1101 / DSM 17681 / MLHE-1).